Reading from the N-terminus, the 145-residue chain is MAKADKKPAEKKPAEKTPAAEPAAAAEKKPKAGKKLPKEPAGAGDKKKKRSKKNVETYKIYIFKVLKQVHPDIGISSKAMGIMNSFINDIFEKLAGESSKLARYNKKPTITSREIQTAVRLVLPGELAKHAVSEGTKAVTKFTSS.

A compositionally biased stretch (basic and acidic residues) spans 1 to 15; that stretch reads MAKADKKPAEKKPAE. A disordered region spans residues 1–53; that stretch reads MAKADKKPAEKKPAEKTPAAEPAAAAEKKPKAGKKLPKEPAGAGDKKKKRSKK. At K3 the chain carries N6-methyllysine. 2 positions are modified to N6-acetyllysine: K6 and K11. At K12 the chain carries N6,N6-dimethyllysine. K16, K28, and K34 each carry N6-acetyllysine. The span at 16–25 shows a compositional bias: low complexity; sequence KTPAAEPAAA. K35 is subject to N6-acetyllysine; partial. A Glycyl lysine isopeptide (Lys-Gly) (interchain with G-Cter in ubiquitin) cross-link involves residue K141.

This sequence belongs to the histone H2B family. In terms of assembly, the nucleosome is a histone octamer containing two molecules each of H2A, H2B, H3 and H4 assembled in one H3-H4 heterotetramer and two H2A-H2B heterodimers. The octamer wraps approximately 147 bp of DNA. Interacts with ORTH2. In terms of processing, can be acetylated to form H2BK5ac, H2BK10ac, H2BK15ac, H2BK27ac, H2BK33ac and H2BK34ac. Post-translationally, dimethylated to form H2BK11me2. Monoubiquitinated by BRE1 to form H2BK143ub1 and deubiquitinated by UBP26. Required for heterochromatic histone H3 di- and trimethylation at H3K4me. May give a specific tag for epigenetic transcriptional activation.

It is found in the nucleus. Its subcellular location is the chromosome. Its function is as follows. Core component of nucleosome. Nucleosomes wrap and compact DNA into chromatin, limiting DNA accessibility to the cellular machineries which require DNA as a template. Histones thereby play a central role in transcription regulation, DNA repair, DNA replication and chromosomal stability. DNA accessibility is regulated via a complex set of post-translational modifications of histones, also called histone code, and nucleosome remodeling. The polypeptide is Histone H2B.10 (Arabidopsis thaliana (Mouse-ear cress)).